Consider the following 550-residue polypeptide: Glucose-6-phosphate isomerase (550 aa).

Residues 164–165, 215–220, glutamine 359, glutamate 363, and histidine 394 each bind D-glucose 6-phosphate; these read GS and SKTFTT. Catalysis depends on glutamate 363, which acts as the Proton donor. Residue histidine 394 is part of the active site. Threonine 455 carries the post-translational modification Phosphothreonine. Lysine 516 is a binding site for D-glucose 6-phosphate. Residue lysine 516 is part of the active site.

It belongs to the GPI family. Homodimer.

The protein localises to the cytoplasm. It localises to the cytosol. It catalyses the reaction alpha-D-glucose 6-phosphate = beta-D-fructose 6-phosphate. It participates in carbohydrate degradation; glycolysis; D-glyceraldehyde 3-phosphate and glycerone phosphate from D-glucose: step 2/4. Its function is as follows. In the cytoplasm, catalyzes the conversion of glucose-6-phosphate to fructose-6-phosphate, the second step in glycolysis, and the reverse reaction during gluconeogenesis. This Schizosaccharomyces pombe (strain 972 / ATCC 24843) (Fission yeast) protein is Glucose-6-phosphate isomerase (pgi1).